The following is a 640-amino-acid chain: Probable Ufm1-specific protease (640 aa).

Residues Cys467, Asp591, and His593 contribute to the active site.

This sequence belongs to the peptidase C78 family.

Thiol protease which recognizes and hydrolyzes the peptide bond at the C-terminal Gly of ufm-1, a ubiquitin-like modifier protein bound to a number of target proteins. The polypeptide is Probable Ufm1-specific protease (Oryza sativa subsp. japonica (Rice)).